We begin with the raw amino-acid sequence, 347 residues long: GMP reductase (347 aa).

Residue 108–131 participates in NADP(+) binding; it reads ADFEKTVQILALNPALNFVCIDVA. Glycine 181 and glycine 183 together coordinate K(+). The Thioimidate intermediate role is filled by cysteine 186. 216-239 serves as a coordination point for NADP(+); it reads IVSDGGCTMPGDVAKAFGGGADFV.

This sequence belongs to the IMPDH/GMPR family. GuaC type 1 subfamily. Homotetramer.

The enzyme catalyses IMP + NH4(+) + NADP(+) = GMP + NADPH + 2 H(+). Catalyzes the irreversible NADPH-dependent deamination of GMP to IMP. It functions in the conversion of nucleobase, nucleoside and nucleotide derivatives of G to A nucleotides, and in maintaining the intracellular balance of A and G nucleotides. This is GMP reductase from Salmonella paratyphi A (strain ATCC 9150 / SARB42).